Here is a 155-residue protein sequence, read N- to C-terminus: Regulatory protein RecX (155 aa).

The protein belongs to the RecX family.

Its subcellular location is the cytoplasm. In terms of biological role, modulates RecA activity. The polypeptide is Regulatory protein RecX (Vibrio parahaemolyticus serotype O3:K6 (strain RIMD 2210633)).